Consider the following 336-residue polypeptide: WAT1-related protein At2g37450 (336 aa).

9 helical membrane passes run 7 to 27 (ALPF…DILT), 45 to 65 (HGVA…PVIA), 79 to 99 (TFAI…ALIF), 115 to 135 (VVGT…KGPA), 160 to 180 (GAVL…LQAI), 189 to 209 (LSLA…VALV), 227 to 247 (LTIT…GGVV), 255 to 275 (FVTA…SIIF), and 279 to 299 (MYLG…LVIW). 2 EamA domains span residues 63 to 126 (VIAQ…GGIM) and 169 to 298 (FSYA…YLVI).

This sequence belongs to the drug/metabolite transporter (DMT) superfamily. Plant drug/metabolite exporter (P-DME) (TC 2.A.7.4) family.

It is found in the membrane. The polypeptide is WAT1-related protein At2g37450 (Arabidopsis thaliana (Mouse-ear cress)).